We begin with the raw amino-acid sequence, 308 residues long: Ornithine carbamoyltransferase (308 aa).

Carbamoyl phosphate is bound by residues 56–59 (STRT), Gln-83, Arg-107, and 134–137 (HPCQ). L-ornithine contacts are provided by residues Asn-165, Asp-225, and 229–230 (SM). Residues 266 to 267 (CL) and Arg-294 each bind carbamoyl phosphate.

This sequence belongs to the aspartate/ornithine carbamoyltransferase superfamily. OTCase family.

The protein resides in the cytoplasm. The enzyme catalyses carbamoyl phosphate + L-ornithine = L-citrulline + phosphate + H(+). It participates in amino-acid biosynthesis; L-arginine biosynthesis; L-arginine from L-ornithine and carbamoyl phosphate: step 1/3. Reversibly catalyzes the transfer of the carbamoyl group from carbamoyl phosphate (CP) to the N(epsilon) atom of ornithine (ORN) to produce L-citrulline. The polypeptide is Ornithine carbamoyltransferase (Cereibacter sphaeroides (strain ATCC 17029 / ATH 2.4.9) (Rhodobacter sphaeroides)).